A 160-amino-acid polypeptide reads, in one-letter code: Ribosomal RNA large subunit methyltransferase H (160 aa).

S-adenosyl-L-methionine-binding positions include L77, G109, and 128–133 (FSRMTF).

This sequence belongs to the RNA methyltransferase RlmH family. Homodimer.

It localises to the cytoplasm. The catalysed reaction is pseudouridine(1915) in 23S rRNA + S-adenosyl-L-methionine = N(3)-methylpseudouridine(1915) in 23S rRNA + S-adenosyl-L-homocysteine + H(+). In terms of biological role, specifically methylates the pseudouridine at position 1915 (m3Psi1915) in 23S rRNA. The chain is Ribosomal RNA large subunit methyltransferase H from Pelotomaculum thermopropionicum (strain DSM 13744 / JCM 10971 / SI).